The chain runs to 402 residues: Protein arginine methyltransferase NDUFAF7 homolog, mitochondrial (402 aa).

Belongs to the NDUFAF7 family.

It is found in the mitochondrion. It catalyses the reaction L-arginyl-[protein] + 2 S-adenosyl-L-methionine = N(omega),N(omega)'-dimethyl-L-arginyl-[protein] + 2 S-adenosyl-L-homocysteine + 2 H(+). Functionally, arginine methyltransferase involved in the assembly or stability of mitochondrial NADH:ubiquinone oxidoreductase complex (complex I). In Saccharomyces cerevisiae (strain ATCC 204508 / S288c) (Baker's yeast), this protein is Protein arginine methyltransferase NDUFAF7 homolog, mitochondrial.